A 302-amino-acid polypeptide reads, in one-letter code: G-protein coupled receptor A5 (302 aa).

Residues 1–20 (MADSSNSSLNCTAIHDQTVL) lie on the Extracellular side of the membrane. Residues 21–41 (ILGQVFNSVWLFISVIFLYIF) traverse the membrane as a helical segment. Residues 42-50 (ACKLCFRPR) are Cytoplasmic-facing. A helical transmembrane segment spans residues 51 to 71 (IYLWLSFYTLGFMLWVLCKVL). Over 72–81 (QEYVTGKFKC) the chain is Extracellular. The helical transmembrane segment at 82 to 102 (VITNCIGDFCLVFLSCIMLGI) threads the bilayer. Residues 103 to 122 (MLDRYLKIQGTLRGGMKDIH) are Cytoplasmic-facing. A helical membrane pass occupies residues 123-143 (IGIFVSASCFGSLMIALLDGL). Residues 144-173 (HMGDSEKLQFNGTESFKCLPATSVSSYKAQ) lie on the Extracellular side of the membrane. A helical membrane pass occupies residues 174–194 (LMFKSIFCIICIIMCLILTCL). Topologically, residues 195 to 208 (TAKKVLGTRLRKKY) are cytoplasmic. Residues 209–229 (VIVGNVGLLSFVNILLWVMIA) traverse the membrane as a helical segment. Residues 230–249 (CGLLKQALESNLSLCPTKQS) are Extracellular-facing. Residues 250–270 (TYIYPYTMPVTVIFVLVIYLF) form a helical membrane-spanning segment. The Cytoplasmic segment spans residues 271 to 302 (SSTHMKNAMRKSGQIRHSLSSPNQVQSSFRLV).

It belongs to the G-protein coupled receptor 1 family.

It is found in the host cell membrane. It localises to the host endoplasmic reticulum membrane. Functionally, acts as a viral G-protein coupled receptor that constitutively activates host alphai-type G-proteins, thereby inhibiting host forskolin-triggered CREB activation. The chain is G-protein coupled receptor A5 (A5) from Connochaetes taurinus (Blue wildebeest).